A 122-amino-acid polypeptide reads, in one-letter code: uncharacterized protein (122 aa).

It localises to the mitochondrion. This is an uncharacterized protein from Claviceps purpurea (Ergot fungus).